Consider the following 215-residue polypeptide: 3-dehydroquinate dehydratase (215 aa).

3-dehydroquinate contacts are provided by residues 27–29 (ELR) and Arg54. His112 functions as the Proton donor/acceptor in the catalytic mechanism. Residue Lys139 is the Schiff-base intermediate with substrate of the active site. The 3-dehydroquinate site is built by Arg176 and Gln198.

The protein belongs to the type-I 3-dehydroquinase family. As to quaternary structure, homodimer.

It catalyses the reaction 3-dehydroquinate = 3-dehydroshikimate + H2O. It functions in the pathway metabolic intermediate biosynthesis; chorismate biosynthesis; chorismate from D-erythrose 4-phosphate and phosphoenolpyruvate: step 3/7. Its function is as follows. Involved in the third step of the chorismate pathway, which leads to the biosynthesis of aromatic amino acids. Catalyzes the cis-dehydration of 3-dehydroquinate (DHQ) and introduces the first double bond of the aromatic ring to yield 3-dehydroshikimate. The polypeptide is 3-dehydroquinate dehydratase (Pyrococcus abyssi (strain GE5 / Orsay)).